The following is a 386-amino-acid chain: FHA domain-containing protein At4g14490 (386 aa).

Residues 28–78 (IRVGRIVRGNEIAIKDAGISTKHLRIESDSGNWVIQDLGSSNGTLLNSNAL) form the FHA domain. The interval 286–311 (KNKGKNKKADQKPLKSFENDEVTDSG) is disordered. Residues 292–303 (KKADQKPLKSFE) show a composition bias toward basic and acidic residues.

The chain is FHA domain-containing protein At4g14490 from Arabidopsis thaliana (Mouse-ear cress).